The chain runs to 307 residues: Porphobilinogen deaminase (307 aa).

S-(dipyrrolylmethanemethyl)cysteine is present on cysteine 241.

This sequence belongs to the HMBS family. In terms of assembly, monomer. It depends on dipyrromethane as a cofactor.

The enzyme catalyses 4 porphobilinogen + H2O = hydroxymethylbilane + 4 NH4(+). The protein operates within porphyrin-containing compound metabolism; protoporphyrin-IX biosynthesis; coproporphyrinogen-III from 5-aminolevulinate: step 2/4. Its function is as follows. Tetrapolymerization of the monopyrrole PBG into the hydroxymethylbilane pre-uroporphyrinogen in several discrete steps. This is Porphobilinogen deaminase from Coxiella burnetii (strain CbuK_Q154) (Coxiella burnetii (strain Q154)).